A 901-amino-acid polypeptide reads, in one-letter code: Probable inorganic carbon transporter subunit DabA (901 aa).

4 residues coordinate Zn(2+): cysteine 424, aspartate 426, histidine 606, and cysteine 621.

Belongs to the inorganic carbon transporter (TC 9.A.2) DabA family. Forms a complex with DabB. Requires Zn(2+) as cofactor.

The protein resides in the cell membrane. Functionally, part of an energy-coupled inorganic carbon pump. This Staphylococcus aureus (strain USA300) protein is Probable inorganic carbon transporter subunit DabA.